Consider the following 45-residue polypeptide: Large ribosomal subunit protein bL34 (45 aa).

The protein belongs to the bacterial ribosomal protein bL34 family.

This Salinispora arenicola (strain CNS-205) protein is Large ribosomal subunit protein bL34.